A 160-amino-acid chain; its full sequence is Putative NrdI-like protein (160 aa).

It belongs to the NrdI family.

The chain is Putative NrdI-like protein from Streptococcus pyogenes serotype M6 (strain ATCC BAA-946 / MGAS10394).